A 597-amino-acid polypeptide reads, in one-letter code: Ribosomal oxygenase 1 (597 aa).

Methionine 1 carries the N-acetylmethionine modification. The tract at residues methionine 1–aspartate 138 is disordered. Composition is skewed to basic residues over residues lysine 14 to proline 24 and arginine 37 to alanine 48. A compositionally biased stretch (low complexity) spans alanine 49–serine 62. Residues serine 62 and serine 65 each carry the phosphoserine modification. A compositionally biased stretch (basic and acidic residues) spans valine 72 to glutamate 81. The residue at position 86 (serine 86) is a Phosphoserine. A JmjC domain is found at cysteine 250 to alanine 395. Fe cation-binding residues include histidine 296, aspartate 298, and histidine 361.

The protein belongs to the ROX family. NO66 subfamily. Interacts with SP7/OSX; the interaction is direct. Interacts with MYC. Interacts with PHF19; leading to its recruitment to H3K36me3 sites. Fe(2+) serves as cofactor.

Its subcellular location is the nucleus. It localises to the nucleolus. It is found in the nucleoplasm. It catalyses the reaction N(6),N(6)-dimethyl-L-lysyl(36)-[histone H3] + 2 2-oxoglutarate + 2 O2 = L-lysyl(36)-[histone H3] + 2 formaldehyde + 2 succinate + 2 CO2. The enzyme catalyses N(6)-methyl-L-lysyl-[protein] + 2-oxoglutarate + O2 = L-lysyl-[protein] + formaldehyde + succinate + CO2. The catalysed reaction is L-histidyl-[protein] + 2-oxoglutarate + O2 = (3S)-3-hydroxy-L-histidyl-[protein] + succinate + CO2. Oxygenase that can act as both a histone lysine demethylase and a ribosomal histidine hydroxylase. Specifically demethylates 'Lys-4' (H3K4me) and 'Lys-36' (H3K36me) of histone H3, thereby playing a central role in histone code. Preferentially demethylates trimethylated H3 'Lys-4' (H3K4me3) and monomethylated H3 'Lys-4' (H3K4me1) residues, while it has weaker activity for dimethylated H3 'Lys-36' (H3K36me2). Acts as a regulator of osteoblast differentiation via its interaction with SP7/OSX by demethylating H3K4me and H3K36me, thereby inhibiting SP7/OSX-mediated promoter activation. Also catalyzes demethylation of non-histone proteins, such as CGAS: demethylation of monomethylated CGAS promotes interaction between CGAS and PARP1, followed by PARP1 inactivation. Also catalyzes the hydroxylation of 60S ribosomal protein L8 on 'His-216', thereby playing a role in ribosome biogenesis. Participates in MYC-induced transcriptional activation. The chain is Ribosomal oxygenase 1 from Rattus norvegicus (Rat).